The following is a 731-amino-acid chain: Catalase-peroxidase (731 aa).

The segment at residues 98 to 226 is a cross-link (tryptophyl-tyrosyl-methioninium (Trp-Tyr) (with M-252)); sequence WHAAGTYRTA…LAAVQMGLIY (129 aa). H99 functions as the Proton acceptor in the catalytic mechanism. Positions 226–252 form a cross-link, tryptophyl-tyrosyl-methioninium (Tyr-Met) (with W-98); that stretch reads YVNPEGPDGNPDIVASGHDVIETFGRM. H267 lines the heme b pocket.

The protein belongs to the peroxidase family. Peroxidase/catalase subfamily. In terms of assembly, homodimer or homotetramer. The cofactor is heme b. In terms of processing, formation of the three residue Trp-Tyr-Met cross-link is important for the catalase, but not the peroxidase activity of the enzyme.

It catalyses the reaction H2O2 + AH2 = A + 2 H2O. The catalysed reaction is 2 H2O2 = O2 + 2 H2O. Its function is as follows. Bifunctional enzyme with both catalase and broad-spectrum peroxidase activity. This is Catalase-peroxidase from Ruegeria pomeroyi (strain ATCC 700808 / DSM 15171 / DSS-3) (Silicibacter pomeroyi).